A 178-amino-acid polypeptide reads, in one-letter code: C-phycoerythrin class 2 subunit beta (178 aa).

Residues Cys50 and Cys61 each contribute to the phycourobilin site. 2 residues coordinate (2R,3E)-phycoerythrobilin: Cys82 and Cys159.

Belongs to the phycobiliprotein family. Heterodimer of an alpha and a beta chain. Post-translationally, contains two covalently linked phycoerythrobilin chromophores and one covalently linked phycourobilin chromophore.

The protein localises to the cellular thylakoid membrane. Functionally, light-harvesting photosynthetic bile pigment-protein from the phycobiliprotein complex. This Synechococcus sp. (strain WH8103) protein is C-phycoerythrin class 2 subunit beta (mpeB).